Here is a 161-residue protein sequence, read N- to C-terminus: Large ribosomal subunit protein uL15 (161 aa).

The interval 1–42 (MKLSDIADNAGSRKKRMRVGRGIGSGKGKQSGRGGKGQTARS) is disordered. A compositionally biased stretch (gly residues) spans 21–37 (RGIGSGKGKQSGRGGKG).

This sequence belongs to the universal ribosomal protein uL15 family. Part of the 50S ribosomal subunit.

Binds to the 23S rRNA. The sequence is that of Large ribosomal subunit protein uL15 from Bradyrhizobium diazoefficiens (strain JCM 10833 / BCRC 13528 / IAM 13628 / NBRC 14792 / USDA 110).